A 192-amino-acid chain; its full sequence is MCKDTYFSGEAIQLSDMLRAREERALRQLHLLKEYPEGSLLSVTMNIPGPIKTSPKLLEAFDIVIKAIQTALADDKICYQLRLLPTTGYEYYLITSLPSQDLKLKMIALETDLPIGRLMDLDVLVLSNGRPSPISRTTLGAPPRQCFICSKEAKVCGRLRKHSVEEMQTAISKLLHSFFNKDNQSSSSDKTG.

Belongs to the CitX family.

The enzyme catalyses apo-[citrate lyase ACP] + 2'-(5''-triphospho-alpha-D-ribosyl)-3'-dephospho-CoA = holo-[citrate lyase ACP] + diphosphate. Functionally, transfers 2-(5''-triphosphoribosyl)-3'-dephosphocoenzyme-A on a serine residue to the apo-acyl carrier protein (gamma chain) of the citrate lyase to yield holo-acyl carrier protein. The chain is Probable apo-citrate lyase phosphoribosyl-dephospho-CoA transferase from Streptococcus pyogenes serotype M18 (strain MGAS8232).